The following is a 237-amino-acid chain: Ribonuclease PH (237 aa).

Phosphate contacts are provided by residues Arg86 and 124 to 126 (GTR).

It belongs to the RNase PH family. Homohexameric ring arranged as a trimer of dimers.

The enzyme catalyses tRNA(n+1) + phosphate = tRNA(n) + a ribonucleoside 5'-diphosphate. Its function is as follows. Phosphorolytic 3'-5' exoribonuclease that plays an important role in tRNA 3'-end maturation. Removes nucleotide residues following the 3'-CCA terminus of tRNAs; can also add nucleotides to the ends of RNA molecules by using nucleoside diphosphates as substrates, but this may not be physiologically important. Probably plays a role in initiation of 16S rRNA degradation (leading to ribosome degradation) during starvation. This is Ribonuclease PH from Dinoroseobacter shibae (strain DSM 16493 / NCIMB 14021 / DFL 12).